The chain runs to 315 residues: MRTFLKFSTLVSKGVLVLVCSFFLTASSNAYPIFAQQNYANPREANGRIVCANCHLAEKPIEIEVPQAVLPDTVFEAVVKIPYDKQIKQVLANGKKGDLNVGAVLILPDGFEIAPPDRIPEEMKAKVGKLYFQPYSAEKKTIFVVGPVPGKKYSEMVFPILSPDPAKTKSISYLKYPIYVGGNRGRGQVYPDGSKSNNTIFTASAAGKITAIEPAGKKGGYTLTIETANGESISEKLPPGPELVVNIGDIVGVDQALTTNPNVGGFGQGETEVVLQNPLRIQGLLVFFLFVLLAQVFLVLKKKQFEKVQLAEMNF.

The signal sequence occupies residues 1 to 30; it reads MRTFLKFSTLVSKGVLVLVCSFFLTASSNA. Positions 31, 51, 54, and 55 each coordinate heme. A helical membrane pass occupies residues 281–300; that stretch reads IQGLLVFFLFVLLAQVFLVL.

Belongs to the cytochrome f family. The 4 large subunits of the cytochrome b6-f complex are cytochrome b6, subunit IV (17 kDa polypeptide, petD), cytochrome f and the Rieske protein, while the 4 small subunits are PetG, PetL, PetM and PetN. The complex functions as a dimer. Requires heme as cofactor.

The protein resides in the plastid. The protein localises to the chloroplast thylakoid membrane. In terms of biological role, component of the cytochrome b6-f complex, which mediates electron transfer between photosystem II (PSII) and photosystem I (PSI), cyclic electron flow around PSI, and state transitions. The chain is Cytochrome f (petA) from Chlorella vulgaris (Green alga).